Consider the following 126-residue polypeptide: MGKKSLVKLTRKTNPRIVSLILTLKDRANVDSAPIWKDIAKRLEAPSRNYAAVNISKINRHTAENDVLLVPGKVLGAGLLDHPVTVAAVTFSESAVEKITEAGGKCLSVEEIMEANPKGSGIRIFR.

It belongs to the eukaryotic ribosomal protein eL18 family.

In Methanosarcina mazei (strain ATCC BAA-159 / DSM 3647 / Goe1 / Go1 / JCM 11833 / OCM 88) (Methanosarcina frisia), this protein is Large ribosomal subunit protein eL18.